The primary structure comprises 190 residues: Large ribosomal subunit protein bL9 (190 aa).

It belongs to the bacterial ribosomal protein bL9 family.

In terms of biological role, binds to the 23S rRNA. The polypeptide is Large ribosomal subunit protein bL9 (Methylobacterium radiotolerans (strain ATCC 27329 / DSM 1819 / JCM 2831 / NBRC 15690 / NCIMB 10815 / 0-1)).